Reading from the N-terminus, the 215-residue chain is LysM and putative peptidoglycan-binding domain-containing protein 2 (215 aa).

The interval 1–40 (MADSSPALSLREGGPRAPRPSAPSPPPRSRSGSESEEAEL) is disordered. Ala-2 is modified (N-acetylalanine). A phosphoserine mark is found at Ser-5, Ser-24, Ser-33, and Ser-57. Residues 17–28 (APRPSAPSPPPR) are compositionally biased toward pro residues. Residues 71 to 115 (VEHRVRAGDTLQGIALKYGVTMEQIKRANKLFTNDCIFLKKTLNI) form the LysM domain. Disordered regions lie at residues 132–175 (DSPE…EEVS) and 193–215 (AAKK…LYHS). Residues 196–205 (KLKEESRDEE) are compositionally biased toward basic and acidic residues.

The chain is LysM and putative peptidoglycan-binding domain-containing protein 2 (LYSMD2) from Homo sapiens (Human).